Reading from the N-terminus, the 375-residue chain is Trichodiene synthase (375 aa).

Belongs to the trichodiene synthase family.

The enzyme catalyses (2E,6E)-farnesyl diphosphate = trichodiene + diphosphate. Its pathway is sesquiterpene biosynthesis; trichothecene biosynthesis. TS is a member of the terpene cyclase group of enzymes. It catalyzes the isomerization and cyclization of farnesyl pyro-phosphate to form trichodiene, the first cyclic intermediate in the biosynthetic pathway for trichothecenes. It serves to branch trichothecene biosynthesis from the isoprenoid pathway. In Fusarium mesoamericanum, this protein is Trichodiene synthase (TRI5).